A 102-amino-acid polypeptide reads, in one-letter code: MPKQKIRIRLKAFDHAILDQSAQKIVETAKRTGAEVSGPIPLPTKREVITILRAPHKYKDSREQFEIKTHKRLIDILNPTPKTVDALMKLDLPSGVDIEIKL.

Belongs to the universal ribosomal protein uS10 family. As to quaternary structure, part of the 30S ribosomal subunit.

Functionally, involved in the binding of tRNA to the ribosomes. In Caldanaerobacter subterraneus subsp. tengcongensis (strain DSM 15242 / JCM 11007 / NBRC 100824 / MB4) (Thermoanaerobacter tengcongensis), this protein is Small ribosomal subunit protein uS10.